A 230-amino-acid polypeptide reads, in one-letter code: 3,4-dihydroxy-2-butanone 4-phosphate synthase (230 aa).

D-ribulose 5-phosphate is bound by residues 38-39 (RE), aspartate 43, 151-155 (RRGHT), and glutamate 175. Glutamate 39 is a binding site for Mg(2+). Histidine 154 lines the Mg(2+) pocket.

Belongs to the DHBP synthase family. In terms of assembly, homodimer. The cofactor is Mg(2+). Mn(2+) is required as a cofactor.

The catalysed reaction is D-ribulose 5-phosphate = (2S)-2-hydroxy-3-oxobutyl phosphate + formate + H(+). It functions in the pathway cofactor biosynthesis; riboflavin biosynthesis; 2-hydroxy-3-oxobutyl phosphate from D-ribulose 5-phosphate: step 1/1. In terms of biological role, catalyzes the conversion of D-ribulose 5-phosphate to formate and 3,4-dihydroxy-2-butanone 4-phosphate. The protein is 3,4-dihydroxy-2-butanone 4-phosphate synthase of Vibrio harveyi (Beneckea harveyi).